Consider the following 105-residue polypeptide: Putative membrane protein insertion efficiency factor (105 aa).

It belongs to the UPF0161 family.

The protein localises to the cell membrane. Functionally, could be involved in insertion of integral membrane proteins into the membrane. The polypeptide is Putative membrane protein insertion efficiency factor (Bifidobacterium longum (strain NCC 2705)).